Consider the following 221-residue polypeptide: Small ribosomal subunit protein uS5 (221 aa).

The S5 DRBM domain occupies 46 to 109 (LKDEVIDIKR…INAKLNIMEI (64 aa)).

It belongs to the universal ribosomal protein uS5 family. As to quaternary structure, part of the 30S ribosomal subunit. Contacts protein S4.

Functionally, with S4 and S12 plays an important role in translational accuracy. The protein is Small ribosomal subunit protein uS5 of Thermoplasma acidophilum (strain ATCC 25905 / DSM 1728 / JCM 9062 / NBRC 15155 / AMRC-C165).